Reading from the N-terminus, the 152-residue chain is UPF0266 membrane protein YobD (152 aa).

The Periplasmic portion of the chain corresponds to M1–D5. The chain crosses the membrane as a helical span at residues L6 to M26. Topologically, residues P27–R44 are cytoplasmic. Residues I45–H65 form a helical membrane-spanning segment. Residue G66 is a topological domain, periplasmic. Residues A67–I87 traverse the membrane as a helical segment. The Cytoplasmic portion of the chain corresponds to R88–Q152.

It belongs to the UPF0266 family.

Its subcellular location is the cell inner membrane. This Salmonella typhi protein is UPF0266 membrane protein YobD (yobD).